Consider the following 1182-residue polypeptide: Rho GTPase-activating protein 20 (1182 aa).

Residues 1–40 (MEAMSPQQDALGAQPGRSSSLTGMSRIAGGPGTKKKMKTL) are disordered. The residue at position 46 (S46) is a Phosphoserine. Positions 85 to 185 (TLLIDGPVEL…WLSLLQRYIA (101 aa)) constitute a PH domain. The region spanning 194–283 (KSIPLKIFAK…TALLTQGSRD (90 aa)) is the Ras-associating domain. The Rho-GAP domain maps to 365–551 (VSLPDLCEND…FLIENCCRVF (187 aa)). Residues S704 and S730 each carry the phosphoserine modification. 6 disordered regions span residues 745–772 (QTQP…KRNT), 803–839 (VASY…QKSS), 935–955 (SYSS…SSQD), 982–1011 (TQRK…GQAS), 1074–1101 (LPSC…EGPG), and 1142–1182 (SGGQ…GTDI). The span at 758–772 (KQSSVTGTDVSKRNT) shows a compositional bias: polar residues. Residues 811–824 (SQDHPRKQAFDADP) show a composition bias toward basic and acidic residues.

Its function is as follows. GTPase activator for the Rho-type GTPases by converting them to an inactive GDP-bound state. The sequence is that of Rho GTPase-activating protein 20 (Arhgap20) from Mus musculus (Mouse).